The sequence spans 79 residues: Conotoxin VnMKLT1-01122 (79 aa).

The first 22 residues, 1 to 22 (MKLTCMKIVAVLFLTAWTFVTA), serve as a signal peptide directing secretion. Positions 23–48 (DDSRNGLEYLFPKAHYEMNPEASKLN) are excised as a propeptide. The residue at position 51 (Gln-51) is a Pyrrolidone carboxylic acid. Intrachain disulfides connect Cys-53-Cys-70, Cys-60-Cys-74, and Cys-69-Cys-78.

Belongs to the conotoxin O1 superfamily. As to expression, expressed by the venom duct.

Its subcellular location is the secreted. The chain is Conotoxin VnMKLT1-01122 from Conus ventricosus (Mediterranean cone).